Here is a 144-residue protein sequence, read N- to C-terminus: Large ribosomal subunit protein uL22 (144 aa).

Positions 123-144 (ELVKKRTMGHKKEKAKQKQKQQ) are disordered. The span at 125–144 (VKKRTMGHKKEKAKQKQKQQ) shows a compositional bias: basic residues.

It belongs to the universal ribosomal protein uL22 family. As to quaternary structure, part of the 50S ribosomal subunit.

Functionally, this protein binds specifically to 23S rRNA; its binding is stimulated by other ribosomal proteins, e.g. L4, L17, and L20. It is important during the early stages of 50S assembly. It makes multiple contacts with different domains of the 23S rRNA in the assembled 50S subunit and ribosome. The globular domain of the protein is located near the polypeptide exit tunnel on the outside of the subunit, while an extended beta-hairpin is found that lines the wall of the exit tunnel in the center of the 70S ribosome. The protein is Large ribosomal subunit protein uL22 of Mycoplasma genitalium (strain ATCC 33530 / DSM 19775 / NCTC 10195 / G37) (Mycoplasmoides genitalium).